Consider the following 198-residue polypeptide: MATDISESSGADCKGDTKNSAKLDADYPLRVLYCGVCSLPTEYCEYMPDVAKCRQWLEKNFPNEFAKLTVENSPKQETGITEGQGPVGEEEEKKKQKRGGRGQIKQKKKTVPQKVTIAKIPRAKKKYVTRVCGLATFEIDLKEAQRFFAQKFSCGASVTGEDEIIIQGDFTDDIIDVIQEKWPEVDDDSIEDLGEVKK.

Ala-2 is subject to N-acetylalanine. Phosphoserine is present on residues Ser-20 and Ser-73. Polar residues predominate over residues 72–81 (NSPKQETGIT). A disordered region spans residues 72–109 (NSPKQETGITEGQGPVGEEEEKKKQKRGGRGQIKQKKK). Residues 95–109 (KQKRGGRGQIKQKKK) are compositionally biased toward basic residues. The SUI1 domain maps to 115-182 (VTIAKIPRAK…DIIDVIQEKW (68 aa)). Ser-189 carries the phosphoserine modification.

This sequence belongs to the DENR family. In terms of assembly, interacts with MCTS1 (via PUA domain); the complex regulates translation reinitiation.

The protein resides in the cytoplasm. Translation regulator forming a complex with MCTS1 to promote translation reinitiation. Translation reinitiation is the process where the small ribosomal subunit remains attached to the mRNA following termination of translation of a regulatory upstream ORF (uORF), and resume scanning on the same mRNA molecule to initiate translation of a downstream ORF, usually the main ORF (mORF). The MCTS1/DENR complex is pivotal to two linked mechanisms essential for translation reinitiation. Firstly, the dissociation of deacylated tRNAs from post-termination 40S ribosomal complexes during ribosome recycling. Secondly, the recruitment in an EIF2-independent manner of aminoacylated initiator tRNA to P site of 40S ribosomes for a new round of translation. This regulatory mechanism governs the translation of more than 150 genes which translation reinitiation is MCTS1/DENR complex-dependent. In Mus musculus (Mouse), this protein is Density-regulated protein (Denr).